Reading from the N-terminus, the 331-residue chain is 6-phosphogluconolactonase (331 aa).

At lysine 287 the chain carries N6-acetyllysine.

Belongs to the cycloisomerase 2 family.

The catalysed reaction is 6-phospho-D-glucono-1,5-lactone + H2O = 6-phospho-D-gluconate + H(+). Its pathway is carbohydrate degradation; pentose phosphate pathway; D-ribulose 5-phosphate from D-glucose 6-phosphate (oxidative stage): step 2/3. Catalyzes the hydrolysis of 6-phosphogluconolactone to 6-phosphogluconate. The polypeptide is 6-phosphogluconolactonase (Shigella flexneri).